A 95-amino-acid chain; its full sequence is Co-chaperonin GroES (95 aa).

It belongs to the GroES chaperonin family. As to quaternary structure, heptamer of 7 subunits arranged in a ring. Interacts with the chaperonin GroEL.

Its subcellular location is the cytoplasm. Together with the chaperonin GroEL, plays an essential role in assisting protein folding. The GroEL-GroES system forms a nano-cage that allows encapsulation of the non-native substrate proteins and provides a physical environment optimized to promote and accelerate protein folding. GroES binds to the apical surface of the GroEL ring, thereby capping the opening of the GroEL channel. In Rickettsia rickettsii (strain Sheila Smith), this protein is Co-chaperonin GroES.